A 431-amino-acid polypeptide reads, in one-letter code: Enolase (431 aa).

The disordered stretch occupies residues 27–47 (LESGHSGRAAVPSGASTGSRE). A (2R)-2-phosphoglycerate-binding site is contributed by Q163. The active-site Proton donor is the E205. Residues D242, E285, and D312 each coordinate Mg(2+). Residues K337, R366, S367, and K388 each contribute to the (2R)-2-phosphoglycerate site. The active-site Proton acceptor is the K337.

This sequence belongs to the enolase family. Requires Mg(2+) as cofactor.

It localises to the cytoplasm. Its subcellular location is the secreted. The protein resides in the cell surface. It carries out the reaction (2R)-2-phosphoglycerate = phosphoenolpyruvate + H2O. It functions in the pathway carbohydrate degradation; glycolysis; pyruvate from D-glyceraldehyde 3-phosphate: step 4/5. Catalyzes the reversible conversion of 2-phosphoglycerate (2-PG) into phosphoenolpyruvate (PEP). It is essential for the degradation of carbohydrates via glycolysis. The sequence is that of Enolase from Oleidesulfovibrio alaskensis (strain ATCC BAA-1058 / DSM 17464 / G20) (Desulfovibrio alaskensis).